Reading from the N-terminus, the 123-residue chain is Large ribosomal subunit protein bL17 (123 aa).

This sequence belongs to the bacterial ribosomal protein bL17 family. In terms of assembly, part of the 50S ribosomal subunit. Contacts protein L32.

The chain is Large ribosomal subunit protein bL17 from Borreliella burgdorferi (strain ATCC 35210 / DSM 4680 / CIP 102532 / B31) (Borrelia burgdorferi).